The sequence spans 153 residues: Aspartate carbamoyltransferase regulatory chain (153 aa).

4 residues coordinate Zn(2+): Cys-109, Cys-114, Cys-138, and Cys-141.

The protein belongs to the PyrI family. In terms of assembly, contains catalytic and regulatory chains. It depends on Zn(2+) as a cofactor.

Functionally, involved in allosteric regulation of aspartate carbamoyltransferase. The protein is Aspartate carbamoyltransferase regulatory chain of Wigglesworthia glossinidia brevipalpis.